We begin with the raw amino-acid sequence, 255 residues long: Aliphatic sulfonates import ATP-binding protein SsuB (255 aa).

In terms of domain architecture, ABC transporter spans 12 to 233 (LLLNAVSKHY…RLGSVRLAEL (222 aa)). 44–51 (GRSGGGKS) is an ATP binding site.

It belongs to the ABC transporter superfamily. Aliphatic sulfonates importer (TC 3.A.1.17.2) family. In terms of assembly, the complex is composed of two ATP-binding proteins (SsuB), two transmembrane proteins (SsuC) and a solute-binding protein (SsuA).

The protein localises to the cell inner membrane. It carries out the reaction ATP + H2O + aliphatic sulfonate-[sulfonate-binding protein]Side 1 = ADP + phosphate + aliphatic sulfonateSide 2 + [sulfonate-binding protein]Side 1.. In terms of biological role, part of the ABC transporter complex SsuABC involved in aliphatic sulfonates import. Responsible for energy coupling to the transport system. In Escherichia coli O6:K15:H31 (strain 536 / UPEC), this protein is Aliphatic sulfonates import ATP-binding protein SsuB.